The following is a 261-amino-acid chain: Ribonuclease HII (261 aa).

The region spanning 71-260 is the RNase H type-2 domain; it reads HYIAGVDEVG…LHKYRHNTLL (190 aa). Residues Asp77, Glu78, and Asp169 each contribute to the a divalent metal cation site.

It belongs to the RNase HII family. Mn(2+) serves as cofactor. Requires Mg(2+) as cofactor.

It localises to the cytoplasm. The catalysed reaction is Endonucleolytic cleavage to 5'-phosphomonoester.. Functionally, endonuclease that specifically degrades the RNA of RNA-DNA hybrids. The chain is Ribonuclease HII from Oceanobacillus iheyensis (strain DSM 14371 / CIP 107618 / JCM 11309 / KCTC 3954 / HTE831).